The primary structure comprises 532 residues: Intercellular adhesion molecule 1 (532 aa).

An N-terminal signal peptide occupies residues 1–27; it reads MAPSSPRPALPALLVLLGALFPGPGNA. Over 28-480 the chain is Extracellular; sequence QTSVSPPKVI…TVNVLSPRYE (453 aa). 2 consecutive Ig-like C2-type domains span residues 41 to 103 and 128 to 193; these read GGSV…QSTA and GKDL…LDLR. Intrachain disulfides connect C48/C92, C52/C96, and C135/C186. The Cell attachment site; atypical signature appears at 152–154; sequence RGE. N-linked (GlcNAc...) asparagine glycosylation is found at N202 and N267. Ig-like C2-type domains lie at 230-297 and 325-378; these read DTQG…LGTQ and GTEV…LEVA. Cystine bridges form between C237–C290 and C332–C371. Residues N385 and N406 are each glycosylated (N-linked (GlcNAc...) asparagine). 3 disulfide bridges follow: C403–C419, C419–C457, and C431–C457. Residues 412–464 enclose the Ig-like C2-type 5 domain; sequence NSQQTPMCQAWGNPLPELKCLKDGTFPLPVGESVTVTRDLEGTYLCRARSTQG. The helical transmembrane segment at 481–503 threads the bilayer; it reads FVIIAVVAAAVIMGTAGLSTYLY. Over 504–532 the chain is Cytoplasmic; that stretch reads NRQRKIRKYRLQQAQKGTPMKPNTQATPP. Phosphothreonine is present on residues T521 and T530.

This sequence belongs to the immunoglobulin superfamily. ICAM family. As to quaternary structure, homodimer. Interacts with MUC1 and promotes cell aggregation in epithelial cells. Interacts with ARHGEF26/SGEF. Interacts (on T cell side) with CD81, CD247 and CD9 at immunological synapses between antigen-presenting cells and T cells. In terms of processing, monoubiquitinated, which is promoted by MARCH9 and leads to endocytosis.

The protein resides in the membrane. Functionally, ICAM proteins are ligands for the leukocyte adhesion protein LFA-1 (integrin alpha-L/beta-2). During leukocyte trans-endothelial migration, ICAM1 engagement promotes the assembly of endothelial apical cups through ARHGEF26/SGEF and RHOG activation. This Gorilla gorilla gorilla (Western lowland gorilla) protein is Intercellular adhesion molecule 1 (ICAM1).